The following is a 909-amino-acid chain: Protein translocase subunit SecA (909 aa).

Residues Gln-87, 105–109 (GEGKT), and Asp-507 contribute to the ATP site. Residues 834-909 (EAVEEQRRRQ…KYKQCCGKLS (76 aa)) form a disordered region. Positions 837-848 (EEQRRRQGDMQY) are enriched in basic and acidic residues. Gly residues predominate over residues 859–871 (QGAGGEGAAGGTA). Zn(2+)-binding residues include Cys-893, Cys-895, Cys-904, and Cys-905.

The protein belongs to the SecA family. As to quaternary structure, monomer and homodimer. Part of the essential Sec protein translocation apparatus which comprises SecA, SecYEG and auxiliary proteins SecDF-YajC and YidC. Zn(2+) is required as a cofactor.

It localises to the cell inner membrane. Its subcellular location is the cytoplasm. It catalyses the reaction ATP + H2O + cellular proteinSide 1 = ADP + phosphate + cellular proteinSide 2.. Functionally, part of the Sec protein translocase complex. Interacts with the SecYEG preprotein conducting channel. Has a central role in coupling the hydrolysis of ATP to the transfer of proteins into and across the cell membrane, serving both as a receptor for the preprotein-SecB complex and as an ATP-driven molecular motor driving the stepwise translocation of polypeptide chains across the membrane. This is Protein translocase subunit SecA from Alkalilimnicola ehrlichii (strain ATCC BAA-1101 / DSM 17681 / MLHE-1).